The sequence spans 355 residues: Homeotic protein knotted-1 (355 aa).

The disordered stretch occupies residues Lys-205–Glu-233. Residues Glu-236 to Leu-256 form the ELK domain. Residues Ser-257–Ser-320 constitute a DNA-binding region (homeobox; TALE-type).

The protein belongs to the TALE/KNOX homeobox family. In terms of tissue distribution, expressed in the apical meristems, in the newly emerged lateral primordia in the floral bud, in their vascular bundles and in the cortex parenchyma of the floral pedicle. Also present in the lateral tips of leaf primordia.

Its subcellular location is the nucleus. Functionally, appears to be involved in meristem formation and in the regulation of leaf morphology. Misexpression makes the leaf more compound which is always associated with growth retardation and loss of apical dominance, resulting in dwarfed, bushy plants. Probably binds to the DNA sequence 5'-TGAC-3'. This is Homeotic protein knotted-1 (KN1) from Solanum lycopersicum (Tomato).